Reading from the N-terminus, the 85-residue chain is Fungal defensin triintsin (85 aa).

The signal sequence occupies residues 1–21 (MQFTKLATVLIVSLMGSAAIA). Residues 22-47 (APSVDNAPAVAAEEVAAAPAENLEKR) constitute a propeptide that is removed on maturation. 3 disulfides stabilise this stretch: Cys51-Cys72, Cys58-Cys80, and Cys62-Cys82.

This sequence belongs to the invertebrate defensin family. Post-translationally, disulfide bonds are essential for antimicrobial activity.

The protein localises to the secreted. Antimicrobial peptide with broad-spectrum activity against Gram-positive bacteria, Gram-negative bacteria, and fungi. Also inhibits clinical isolates, including methicillin-resistant S.aureus (MRSA) (MIC=32 uM), K.pneumoniae, C.albicans and C.parapsilosis. Displays minimal inhibitory concentration (MIC) values similar to minimal bactericidal concentrations (MBC), suggesting a disruptive mechanism mode of action associated with membrane lysis. In vitro, shows hemolytic activity against human red blood cells. The protein is Fungal defensin triintsin of Trichophyton interdigitale (strain MR816).